The sequence spans 155 residues: RING finger protein 122 (155 aa).

A helical transmembrane segment spans residues 40–60; sequence VIFGTGIFVFMLSLIFCCYFI. An RING-type; atypical zinc finger spans residues 93 to 134; sequence CAVCLEDFKGKDELGVLPCQHAFHRKCLVKWLEVRCVCPMCN.

As to expression, widely expressed in several tissues and cell lines.

It localises to the golgi apparatus. The protein resides in the endoplasmic reticulum. Its subcellular location is the membrane. Functionally, may induce necrosis and apoptosis. May play a role in cell viability. The chain is RING finger protein 122 (RNF122) from Homo sapiens (Human).